Reading from the N-terminus, the 585-residue chain is Zinc finger protein 732 (585 aa).

The KRAB domain maps to 4–75; sequence LTFRDVAIEF…KIHETVAKHP (72 aa). The segment at 141–163 adopts a C2H2-type 1; degenerate zinc-finger fold; sequence FQCNVHVKVFSTFSNSNQRRIRH. A C2H2-type 2; degenerate zinc finger spans residues 167–189; sequence KHFKECGKSFQKFSDLTQHQGIH. Residues 195-217 form a C2H2-type 3; degenerate zinc finger; sequence YTCEECGKDFKWYLIFNEYEIIH. The C2H2-type 4 zinc-finger motif lies at 223–244; it reads FTCEECGNIFTTSSNFAKHKVH. The segment at 250-272 adopts a C2H2-type 5; degenerate zinc-finger fold; the sequence is YKYEECGKAFNRSSTLTKHKRIH. C2H2-type zinc fingers lie at residues 278 to 300, 306 to 328, 334 to 356, 362 to 384, 390 to 412, 418 to 440, 446 to 468, 474 to 496, and 502 to 524; these read FTCEECGKIITSSSNVAKHKKIH, YKCQECGKVFNRSTTLTKHNRIH, YTCEECGKAFSRSSVLNEHKRIH, YKCEQCGKAFRQSATLNKHKSIH, YTCEECGKAFSRFTTLNEHKRIH, HKCEECGKAFGWSTDLNKHKIIH, YKCEECGKAFGWSAYLSKHKKIH, YRCEECGKAFLCSRALNKHKTIH, and YECEECGKAFGWSTYLSKHKKIH. Residues 530 to 552 form a C2H2-type 15; degenerate zinc finger; it reads YRCEECGKAFRRSRVLNKYKTIH. The C2H2-type 16; degenerate zinc-finger motif lies at 558 to 580; sequence PKCKGCGKAFKWSSYLNQHNKIY.

Belongs to the krueppel C2H2-type zinc-finger protein family.

The protein localises to the nucleus. Its function is as follows. May be involved in transcriptional regulation. The sequence is that of Zinc finger protein 732 (ZNF732) from Homo sapiens (Human).